We begin with the raw amino-acid sequence, 67 residues long: Large ribosomal subunit protein bL35 (67 aa).

It belongs to the bacterial ribosomal protein bL35 family.

This chain is Large ribosomal subunit protein bL35, found in Allorhizobium ampelinum (strain ATCC BAA-846 / DSM 112012 / S4) (Agrobacterium vitis (strain S4)).